Here is a 396-residue protein sequence, read N- to C-terminus: Phosphopentomutase (396 aa).

D13, D288, H293, D329, H330, and H341 together coordinate Mn(2+).

This sequence belongs to the phosphopentomutase family. The cofactor is Mn(2+).

It localises to the cytoplasm. The enzyme catalyses 2-deoxy-alpha-D-ribose 1-phosphate = 2-deoxy-D-ribose 5-phosphate. The catalysed reaction is alpha-D-ribose 1-phosphate = D-ribose 5-phosphate. The protein operates within carbohydrate degradation; 2-deoxy-D-ribose 1-phosphate degradation; D-glyceraldehyde 3-phosphate and acetaldehyde from 2-deoxy-alpha-D-ribose 1-phosphate: step 1/2. Its function is as follows. Isomerase that catalyzes the conversion of deoxy-ribose 1-phosphate (dRib-1-P) and ribose 1-phosphate (Rib-1-P) to deoxy-ribose 5-phosphate (dRib-5-P) and ribose 5-phosphate (Rib-5-P), respectively. The chain is Phosphopentomutase from Clostridium perfringens (strain 13 / Type A).